A 150-amino-acid chain; its full sequence is UPF0178 protein Ssed_1350 (150 aa).

This sequence belongs to the UPF0178 family.

The sequence is that of UPF0178 protein Ssed_1350 from Shewanella sediminis (strain HAW-EB3).